Reading from the N-terminus, the 362-residue chain is Exopolygalacturonase (362 aa).

PbH1 repeat units lie at residues 138 to 164 (CKNL…HIGR), 165 to 186 (SDGV…SLGD), 188 to 208 (SKNI…SVGS), and 218 to 239 (VVGI…RIKT). A glycan (N-linked (GlcNAc...) asparagine) is linked at N140. The Proton donor role is filled by D179. N192 and N195 each carry an N-linked (GlcNAc...) asparagine glycan. The active site involves H202. A glycan (N-linked (GlcNAc...) asparagine) is linked at N225.

Belongs to the glycosyl hydrolase 28 family. As to expression, pollen tubes growing through the style during pollination.

The protein resides in the secreted. It localises to the cell wall. It carries out the reaction [(1-&gt;4)-alpha-D-galacturonosyl](n) + H2O = alpha-D-galacturonate + [(1-&gt;4)-alpha-D-galacturonosyl](n-1). May function in depolymerizing pectin during pollen development, germination, and tube growth. Acts as an exo-polygalacturonase. This chain is Exopolygalacturonase, found in Oenothera organensis (Evening primrose).